Consider the following 362-residue polypeptide: 3-dehydroquinate synthase (362 aa).

NAD(+) contacts are provided by residues 71-76, 105-109, 129-130, lysine 142, lysine 151, and 169-172; these read DGEQYK, GVIGD, TT, and CLKT. Positions 184, 247, and 264 each coordinate Zn(2+).

It belongs to the sugar phosphate cyclases superfamily. Dehydroquinate synthase family. Co(2+) is required as a cofactor. The cofactor is Zn(2+). Requires NAD(+) as cofactor.

It is found in the cytoplasm. The catalysed reaction is 7-phospho-2-dehydro-3-deoxy-D-arabino-heptonate = 3-dehydroquinate + phosphate. Its pathway is metabolic intermediate biosynthesis; chorismate biosynthesis; chorismate from D-erythrose 4-phosphate and phosphoenolpyruvate: step 2/7. Its function is as follows. Catalyzes the conversion of 3-deoxy-D-arabino-heptulosonate 7-phosphate (DAHP) to dehydroquinate (DHQ). In Salmonella schwarzengrund (strain CVM19633), this protein is 3-dehydroquinate synthase.